A 778-amino-acid chain; its full sequence is Degenerin deg-1 (778 aa).

Residues 1–82 (MSNHHSKTKK…IARNSFSKLM (82 aa)) are Cytoplasmic-facing. A helical transmembrane segment spans residues 83–103 (WGLIIFSFLLMFAYQASKLIF). The Extracellular segment spans residues 104–711 (KFSAHEKITD…LVNLIADFGG (608 aa)). Basic and acidic residues predominate over residues 154–165 (NAKTHSKSEGEK). Disordered regions lie at residues 154 to 180 (NAKT…DASQ) and 201 to 220 (SNKT…QRSI). 4 N-linked (GlcNAc...) asparagine glycosylation sites follow: Asn-202, Asn-209, Asn-272, and Asn-342. A compositionally biased stretch (low complexity) spans 346-369 (TSTTTTTTTTPPPTTTSTTTTTTT). Residues 346-380 (TSTTTTTTTTPPPTTTSTTTTTTTTPPPTTTARPN) form a disordered region. N-linked (GlcNAc...) asparagine glycans are attached at residues Asn-473, Asn-492, and Asn-606. Residues 712-732 (HLGLWLGFSVITVMEVCVLLV) traverse the membrane as a helical segment. Topologically, residues 733 to 778 (DMISLFFKSRHEEKLLRQSTKRKDVPEDKRQITVGSGRKSDAFVSI) are cytoplasmic.

The protein belongs to the amiloride-sensitive sodium channel (TC 1.A.6) family.

It localises to the membrane. Functionally, probable sodium channel subunit. Required by a subset of neurons. This chain is Degenerin deg-1, found in Caenorhabditis elegans.